A 140-amino-acid chain; its full sequence is MEQELMRIGVSLPEKLLSRFDEIISQRGYSSRSEGIRDAIRNYIIHYEWMSDVEGERVGVITIVYSHHQRGLVDSLTDIQHEFGSIINSSLHVHLDKDNCLEVVILRGEGKDVRRAAERMMALKGVKHVKLTTTSVGAEL.

Ni(2+) is bound by residues histidine 81, histidine 92, histidine 94, and cysteine 100.

It belongs to the transcriptional regulatory CopG/NikR family. Ni(2+) serves as cofactor.

Its function is as follows. Transcriptional regulator. This Methanothrix thermoacetophila (strain DSM 6194 / JCM 14653 / NBRC 101360 / PT) (Methanosaeta thermophila) protein is Putative nickel-responsive regulator.